A 456-amino-acid polypeptide reads, in one-letter code: Bifunctional protein GlmU (456 aa).

Residues Met1–Arg229 are pyrophosphorylase. UDP-N-acetyl-alpha-D-glucosamine-binding positions include Leu11–Gly14, Lys25, Gln76, Gly81–Thr82, Tyr103–Asp105, Gly140, Glu154, Asn169, and Asn227. Asp105 contacts Mg(2+). Residue Asn227 coordinates Mg(2+). A linker region spans residues Leu230–Ala250. Positions Gly251 to Lys456 are N-acetyltransferase. Residues Arg333 and Lys351 each contribute to the UDP-N-acetyl-alpha-D-glucosamine site. Residue His363 is the Proton acceptor of the active site. Residues Tyr366 and Asn377 each contribute to the UDP-N-acetyl-alpha-D-glucosamine site. Residues Ala380, Asn386–Tyr387, Ser405, Ala423, and Arg440 contribute to the acetyl-CoA site.

This sequence in the N-terminal section; belongs to the N-acetylglucosamine-1-phosphate uridyltransferase family. The protein in the C-terminal section; belongs to the transferase hexapeptide repeat family. As to quaternary structure, homotrimer. The cofactor is Mg(2+).

The protein resides in the cytoplasm. It carries out the reaction alpha-D-glucosamine 1-phosphate + acetyl-CoA = N-acetyl-alpha-D-glucosamine 1-phosphate + CoA + H(+). The enzyme catalyses N-acetyl-alpha-D-glucosamine 1-phosphate + UTP + H(+) = UDP-N-acetyl-alpha-D-glucosamine + diphosphate. The protein operates within nucleotide-sugar biosynthesis; UDP-N-acetyl-alpha-D-glucosamine biosynthesis; N-acetyl-alpha-D-glucosamine 1-phosphate from alpha-D-glucosamine 6-phosphate (route II): step 2/2. It functions in the pathway nucleotide-sugar biosynthesis; UDP-N-acetyl-alpha-D-glucosamine biosynthesis; UDP-N-acetyl-alpha-D-glucosamine from N-acetyl-alpha-D-glucosamine 1-phosphate: step 1/1. It participates in bacterial outer membrane biogenesis; LPS lipid A biosynthesis. Catalyzes the last two sequential reactions in the de novo biosynthetic pathway for UDP-N-acetylglucosamine (UDP-GlcNAc). The C-terminal domain catalyzes the transfer of acetyl group from acetyl coenzyme A to glucosamine-1-phosphate (GlcN-1-P) to produce N-acetylglucosamine-1-phosphate (GlcNAc-1-P), which is converted into UDP-GlcNAc by the transfer of uridine 5-monophosphate (from uridine 5-triphosphate), a reaction catalyzed by the N-terminal domain. This chain is Bifunctional protein GlmU, found in Pectobacterium atrosepticum (strain SCRI 1043 / ATCC BAA-672) (Erwinia carotovora subsp. atroseptica).